A 208-amino-acid chain; its full sequence is dITP/XTP pyrophosphatase (208 aa).

Residue S16–K21 coordinates substrate. D79 (proton acceptor) is an active-site residue. D79 provides a ligand contact to Mg(2+). Substrate-binding positions include S80, F166 to D169, K189, and H194 to R195.

This sequence belongs to the HAM1 NTPase family. Homodimer. Mg(2+) is required as a cofactor.

It catalyses the reaction XTP + H2O = XMP + diphosphate + H(+). The catalysed reaction is dITP + H2O = dIMP + diphosphate + H(+). The enzyme catalyses ITP + H2O = IMP + diphosphate + H(+). In terms of biological role, pyrophosphatase that catalyzes the hydrolysis of nucleoside triphosphates to their monophosphate derivatives, with a high preference for the non-canonical purine nucleotides XTP (xanthosine triphosphate), dITP (deoxyinosine triphosphate) and ITP. Seems to function as a house-cleaning enzyme that removes non-canonical purine nucleotides from the nucleotide pool, thus preventing their incorporation into DNA/RNA and avoiding chromosomal lesions. This chain is dITP/XTP pyrophosphatase, found in Acinetobacter baumannii (strain AB307-0294).